We begin with the raw amino-acid sequence, 405 residues long: S-adenosylmethionine synthase (405 aa).

Position 139–144 (139–144 (GKGSAD)) interacts with ATP.

It belongs to the AdoMet synthase 2 family. Mg(2+) serves as cofactor.

The catalysed reaction is L-methionine + ATP + H2O = S-adenosyl-L-methionine + phosphate + diphosphate. It functions in the pathway amino-acid biosynthesis; S-adenosyl-L-methionine biosynthesis; S-adenosyl-L-methionine from L-methionine: step 1/1. Catalyzes the formation of S-adenosylmethionine from methionine and ATP. This Sulfurisphaera tokodaii (strain DSM 16993 / JCM 10545 / NBRC 100140 / 7) (Sulfolobus tokodaii) protein is S-adenosylmethionine synthase.